Here is a 723-residue protein sequence, read N- to C-terminus: MGAKTPWIQLQKLLNWWVRDQDWNQHVDQLHMLQQKSIWESPLLRAAKENDMCTLKKLQHDQNCDFRQRGALGETALHVAALYDNLDAAIMLMEAAPYLVTESTLCEPFVGQTALHIAVMNQNVNLVRALLARGASASARATGSAFHRSSHNLIYYGEHPLSFAACVGSEEIVRLLIEHGADIRAQDSLGNTVLHILVLQPNKTFACQMYNLLLSYDGGDHLKSLELVPNNQGLTPFKLAGVEGNTVMFQHLMQKRKRIQWSFGPLTSSLYDLTEIDSWGEELSFLELVVSSKKKEARQILEQTPVKELVSLKWKKYGQPYFCLLGALYIFYMVCFTTCCVYRPLKFRDANRTHVRDNTIMEQKSLQEAYVTYQDKIRLVGELVTVIGAVIILLLEIPDIFRVGASRYFGQTVLGGPFHVIIITYASLVLLTMAMRLTNVNGEVVPMSMALVLGWCSVMYFARGFQMLGPFTIMIQKMIFGDLLRFCWLMAMVILGFASAFYIIFQTEDPDNLGEFSDYPTAMFSTFELFLTIIDGPANYRVDLPFMYSVTYATFAIIATLLMLNLFIAMMGDTHWRVAQERDELWRAQVVATTVMLERKMPRFLWPRSGICGCEYGLGDRWFLRVEHHQEQNPYRVLRYVEAFKSSDKEEVQEQLSEKQPSGTETGTLARGSVVLQTPPLSRTTSLSSNSHRGWEILRRNTLGHLNLGLDPGEGDGEEIYQF.

The Cytoplasmic portion of the chain corresponds to 1-320; it reads MGAKTPWIQL…SLKWKKYGQP (320 aa). ANK repeat units follow at residues 38-68, 72-101, 110-139, 156-185, 189-222, and 232-261; these read IWESPLLRAAKENDMCTLKKLQHDQNCDFRQ, LGETALHVAALYDNLDAAIMLMEAAPYLVT, VGQTALHIAVMNQNVNLVRALLARGASASA, YGEHPLSFAACVGSEEIVRLLIEHGADIRA, LGNTVLHILVLQPNKTFACQMYNLLLSYDGGDHL, and QGLTPFKLAGVEGNTVMFQHLMQKRKRIQW. Residues 321–341 traverse the membrane as a helical segment; that stretch reads YFCLLGALYIFYMVCFTTCCV. Residues 342-378 lie on the Extracellular side of the membrane; it reads YRPLKFRDANRTHVRDNTIMEQKSLQEAYVTYQDKIR. Residues 379 to 401 form a helical membrane-spanning segment; the sequence is LVGELVTVIGAVIILLLEIPDIF. The Extracellular portion of the chain corresponds to 402 to 412; that stretch reads RVGASRYFGQT. The helical transmembrane segment at 413–435 threads the bilayer; that stretch reads VLGGPFHVIIITYASLVLLTMAM. The Cytoplasmic portion of the chain corresponds to 436-441; the sequence is RLTNVN. A helical transmembrane segment spans residues 442 to 462; the sequence is GEVVPMSMALVLGWCSVMYFA. Residues 463-485 are Extracellular-facing; sequence RGFQMLGPFTIMIQKMIFGDLLR. Residues 486-506 traverse the membrane as a helical segment; it reads FCWLMAMVILGFASAFYIIFQ. Positions 517 to 537 form an intramembrane region, pore-forming; the sequence is SDYPTAMFSTFELFLTIIDGP. A Ca(2+)-binding site is contributed by aspartate 535. A helical transmembrane segment spans residues 550–570; sequence VTYATFAIIATLLMLNLFIAM. The Cytoplasmic portion of the chain corresponds to 571–723; it reads MGDTHWRVAQ…EGDGEEIYQF (153 aa). The segment at 591-595 is interaction with S100A10; sequence VATTV. The interval 643–646 is involved in Ca(2+)-dependent inactivation; the sequence is AFKS. The segment at 651–673 is disordered; it reads EVQEQLSEKQPSGTETGTLARGS. Residues 654-667 show a composition bias toward polar residues; sequence EQLSEKQPSGTETG. Residue threonine 678 is modified to Phosphothreonine. Residue serine 682 is modified to Phosphoserine. Positions 693–723 are involved in Ca(2+)-dependent inactivation; that stretch reads RGWEILRRNTLGHLNLGLDPGEGDGEEIYQF.

Belongs to the transient receptor (TC 1.A.4) family. TrpV subfamily. TRPV5 sub-subfamily. In terms of assembly, homotetramer and probably heterotetramer with TRPV6. Interacts with TRPV6. Interacts with S100A10 and probably with the ANAX2-S100A10 heterotetramer. The interaction with S100A10 is required for the trafficking to the plasma membrane. Interacts with calmodulin. Interacts with BSPRY, which results in its inactivation. Post-translationally, glycosylated. In terms of tissue distribution, detected in kidney cortex (at protein level).

It is found in the apical cell membrane. The catalysed reaction is Ca(2+)(in) = Ca(2+)(out). With respect to regulation, activated by WNK3. Its function is as follows. Constitutively active calcium selective cation channel thought to be involved in Ca(2+) reabsorption in kidney and intestine. Required for normal Ca(2+) reabsorption in the kidney distal convoluted tubules. The channel is activated by low internal calcium level and the current exhibits an inward rectification. A Ca(2+)-dependent feedback regulation includes fast channel inactivation and slow current decay. Heteromeric assembly with TRPV6 seems to modify channel properties. TRPV5-TRPV6 heteromultimeric concatemers exhibit voltage-dependent gating. This Mus musculus (Mouse) protein is Transient receptor potential cation channel subfamily V member 5 (Trpv5).